A 75-amino-acid chain; its full sequence is Small ribosomal subunit protein eS31 (75 aa).

4 residues coordinate Zn(2+): C41, C44, C60, and C63. A C4-type zinc finger spans residues 41–63; the sequence is CPRCGSIMAHHLKPNERWSCGKC.

It belongs to the eukaryotic ribosomal protein eS31 family. In terms of assembly, part of the 30S ribosomal subunit. Requires Zn(2+) as cofactor.

The chain is Small ribosomal subunit protein eS31 from Saccharolobus solfataricus (strain ATCC 35092 / DSM 1617 / JCM 11322 / P2) (Sulfolobus solfataricus).